Reading from the N-terminus, the 182-residue chain is Antigenic integral membrane glycoprotein (182 aa).

The N-terminal stretch at 1–35 (MFSFHERMKKKHVTIRVYKHERILVFLFVLFISTT) is a signal peptide. 2 N-linked (GlcNAc...) asparagine glycosylation sites follow: Asn-88 and Asn-120. The helical transmembrane segment at 162-180 (EFLMSSCIVITLNLFIFMY) threads the bilayer. Cys-168 is lipidated: S-palmitoyl cysteine.

It localises to the cell membrane. Functionally, major antigen in the surface tegument. In Schistosoma mansoni (Blood fluke), this protein is Antigenic integral membrane glycoprotein.